We begin with the raw amino-acid sequence, 428 residues long: Adenylosuccinate synthetase (428 aa).

GTP-binding positions include 12 to 18 and 40 to 42; these read GDEGKGK and GHT. D13 acts as the Proton acceptor in catalysis. D13 and G40 together coordinate Mg(2+). IMP is bound by residues 13–16, 38–41, T129, R143, Q224, T239, and R303; these read DEGK and NAGH. H41 functions as the Proton donor in the catalytic mechanism. 299 to 305 contributes to the substrate binding site; the sequence is VTTGRIR. GTP contacts are provided by residues R305, 331–333, and 410–412; these read KVD and AYG.

This sequence belongs to the adenylosuccinate synthetase family. In terms of assembly, homodimer. The cofactor is Mg(2+).

It localises to the cytoplasm. The catalysed reaction is IMP + L-aspartate + GTP = N(6)-(1,2-dicarboxyethyl)-AMP + GDP + phosphate + 2 H(+). Its pathway is purine metabolism; AMP biosynthesis via de novo pathway; AMP from IMP: step 1/2. Functionally, plays an important role in the de novo pathway of purine nucleotide biosynthesis. Catalyzes the first committed step in the biosynthesis of AMP from IMP. The sequence is that of Adenylosuccinate synthetase from Francisella tularensis subsp. novicida (strain U112).